A 261-amino-acid chain; its full sequence is Imidazole glycerol phosphate synthase subunit HisF (261 aa).

Catalysis depends on residues Asp-16 and Asp-135.

This sequence belongs to the HisA/HisF family. Heterodimer of HisH and HisF.

Its subcellular location is the cytoplasm. The catalysed reaction is 5-[(5-phospho-1-deoxy-D-ribulos-1-ylimino)methylamino]-1-(5-phospho-beta-D-ribosyl)imidazole-4-carboxamide + L-glutamine = D-erythro-1-(imidazol-4-yl)glycerol 3-phosphate + 5-amino-1-(5-phospho-beta-D-ribosyl)imidazole-4-carboxamide + L-glutamate + H(+). The protein operates within amino-acid biosynthesis; L-histidine biosynthesis; L-histidine from 5-phospho-alpha-D-ribose 1-diphosphate: step 5/9. IGPS catalyzes the conversion of PRFAR and glutamine to IGP, AICAR and glutamate. The HisF subunit catalyzes the cyclization activity that produces IGP and AICAR from PRFAR using the ammonia provided by the HisH subunit. This is Imidazole glycerol phosphate synthase subunit HisF from Mycolicibacterium vanbaalenii (strain DSM 7251 / JCM 13017 / BCRC 16820 / KCTC 9966 / NRRL B-24157 / PYR-1) (Mycobacterium vanbaalenii).